Reading from the N-terminus, the 455-residue chain is Bifunctional protein GlmU (455 aa).

The pyrophosphorylase stretch occupies residues 1 to 230 (MSNRFAVILA…VEETLGVNDR (230 aa)). Residues 9–12 (LAAG), lysine 23, glutamine 73, and 78–79 (GT) each bind UDP-N-acetyl-alpha-D-glucosamine. Mg(2+) is bound at residue aspartate 103. UDP-N-acetyl-alpha-D-glucosamine-binding residues include glycine 140, glutamate 155, asparagine 170, and asparagine 228. Asparagine 228 is a Mg(2+) binding site. A linker region spans residues 231-251 (VALAQAEQVMKRRINEAWMRK). The N-acetyltransferase stretch occupies residues 252–455 (GVTFIDPEQT…KEHYVTKKNN (204 aa)). Arginine 333 and lysine 351 together coordinate UDP-N-acetyl-alpha-D-glucosamine. Catalysis depends on histidine 363, which acts as the Proton acceptor. The UDP-N-acetyl-alpha-D-glucosamine site is built by tyrosine 366 and asparagine 377. Acetyl-CoA-binding positions include 386-387 (NY), alanine 423, and arginine 440.

The protein in the N-terminal section; belongs to the N-acetylglucosamine-1-phosphate uridyltransferase family. This sequence in the C-terminal section; belongs to the transferase hexapeptide repeat family. As to quaternary structure, homotrimer. The cofactor is Mg(2+).

The protein resides in the cytoplasm. The catalysed reaction is alpha-D-glucosamine 1-phosphate + acetyl-CoA = N-acetyl-alpha-D-glucosamine 1-phosphate + CoA + H(+). The enzyme catalyses N-acetyl-alpha-D-glucosamine 1-phosphate + UTP + H(+) = UDP-N-acetyl-alpha-D-glucosamine + diphosphate. The protein operates within nucleotide-sugar biosynthesis; UDP-N-acetyl-alpha-D-glucosamine biosynthesis; N-acetyl-alpha-D-glucosamine 1-phosphate from alpha-D-glucosamine 6-phosphate (route II): step 2/2. It functions in the pathway nucleotide-sugar biosynthesis; UDP-N-acetyl-alpha-D-glucosamine biosynthesis; UDP-N-acetyl-alpha-D-glucosamine from N-acetyl-alpha-D-glucosamine 1-phosphate: step 1/1. Its pathway is bacterial outer membrane biogenesis; LPS lipid A biosynthesis. Its function is as follows. Catalyzes the last two sequential reactions in the de novo biosynthetic pathway for UDP-N-acetylglucosamine (UDP-GlcNAc). The C-terminal domain catalyzes the transfer of acetyl group from acetyl coenzyme A to glucosamine-1-phosphate (GlcN-1-P) to produce N-acetylglucosamine-1-phosphate (GlcNAc-1-P), which is converted into UDP-GlcNAc by the transfer of uridine 5-monophosphate (from uridine 5-triphosphate), a reaction catalyzed by the N-terminal domain. The chain is Bifunctional protein GlmU from Halalkalibacterium halodurans (strain ATCC BAA-125 / DSM 18197 / FERM 7344 / JCM 9153 / C-125) (Bacillus halodurans).